We begin with the raw amino-acid sequence, 227 residues long: Cytochrome c oxidase subunit 2 (227 aa).

Residues 1–14 (MAYPLQLGFQDASS) are Mitochondrial intermembrane-facing. The chain crosses the membrane as a helical span at residues 15–45 (PIMEELLHFHDHTLMIVFLISSLVLYIISLM). Topologically, residues 46–59 (LTTKLTHTSTMDAQ) are mitochondrial matrix. A helical membrane pass occupies residues 60-87 (EVETIWTILPAIILILIALPSLRILYMM). Residues 88 to 227 (DEINNPSLTV…HFENWTTTML (140 aa)) lie on the Mitochondrial intermembrane side of the membrane. The Cu cation site is built by His-161, Cys-196, Glu-198, Cys-200, His-204, and Met-207. A Mg(2+)-binding site is contributed by Glu-198.

It belongs to the cytochrome c oxidase subunit 2 family. In terms of assembly, component of the cytochrome c oxidase (complex IV, CIV), a multisubunit enzyme composed of 14 subunits. The complex is composed of a catalytic core of 3 subunits MT-CO1, MT-CO2 and MT-CO3, encoded in the mitochondrial DNA, and 11 supernumerary subunits COX4I, COX5A, COX5B, COX6A, COX6B, COX6C, COX7A, COX7B, COX7C, COX8 and NDUFA4, which are encoded in the nuclear genome. The complex exists as a monomer or a dimer and forms supercomplexes (SCs) in the inner mitochondrial membrane with NADH-ubiquinone oxidoreductase (complex I, CI) and ubiquinol-cytochrome c oxidoreductase (cytochrome b-c1 complex, complex III, CIII), resulting in different assemblies (supercomplex SCI(1)III(2)IV(1) and megacomplex MCI(2)III(2)IV(2)). Found in a complex with TMEM177, COA6, COX18, COX20, SCO1 and SCO2. Interacts with TMEM177 in a COX20-dependent manner. Interacts with COX20. Interacts with COX16. Requires Cu cation as cofactor.

It is found in the mitochondrion inner membrane. It catalyses the reaction 4 Fe(II)-[cytochrome c] + O2 + 8 H(+)(in) = 4 Fe(III)-[cytochrome c] + 2 H2O + 4 H(+)(out). Functionally, component of the cytochrome c oxidase, the last enzyme in the mitochondrial electron transport chain which drives oxidative phosphorylation. The respiratory chain contains 3 multisubunit complexes succinate dehydrogenase (complex II, CII), ubiquinol-cytochrome c oxidoreductase (cytochrome b-c1 complex, complex III, CIII) and cytochrome c oxidase (complex IV, CIV), that cooperate to transfer electrons derived from NADH and succinate to molecular oxygen, creating an electrochemical gradient over the inner membrane that drives transmembrane transport and the ATP synthase. Cytochrome c oxidase is the component of the respiratory chain that catalyzes the reduction of oxygen to water. Electrons originating from reduced cytochrome c in the intermembrane space (IMS) are transferred via the dinuclear copper A center (CU(A)) of subunit 2 and heme A of subunit 1 to the active site in subunit 1, a binuclear center (BNC) formed by heme A3 and copper B (CU(B)). The BNC reduces molecular oxygen to 2 water molecules using 4 electrons from cytochrome c in the IMS and 4 protons from the mitochondrial matrix. This Tupaia glis (Common tree shrew) protein is Cytochrome c oxidase subunit 2 (MT-CO2).